The chain runs to 76 residues: Tautomerase PptA (76 aa).

Catalysis depends on Pro2, which acts as the Proton acceptor; via imino nitrogen.

This sequence belongs to the 4-oxalocrotonate tautomerase family. PptA subfamily. Homodimer.

It localises to the cytoplasm. In Cronobacter sakazakii (strain ATCC BAA-894) (Enterobacter sakazakii), this protein is Tautomerase PptA.